An 84-amino-acid chain; its full sequence is Acyl carrier protein (84 aa).

One can recognise a Carrier domain in the interval 6 to 81; it reads EEILTGLAEI…DAVDYIANAT (76 aa). An O-(pantetheine 4'-phosphoryl)serine modification is found at Ser-41.

This sequence belongs to the acyl carrier protein (ACP) family. Post-translationally, 4'-phosphopantetheine is transferred from CoA to a specific serine of apo-ACP by AcpS. This modification is essential for activity because fatty acids are bound in thioester linkage to the sulfhydryl of the prosthetic group.

The protein localises to the cytoplasm. The protein operates within lipid metabolism; fatty acid biosynthesis. Functionally, carrier of the growing fatty acid chain in fatty acid biosynthesis. This Acidothermus cellulolyticus (strain ATCC 43068 / DSM 8971 / 11B) protein is Acyl carrier protein.